Consider the following 257-residue polypeptide: Large ribosomal subunit protein uL2 (257 aa).

The interval 207 to 230 is disordered; the sequence is VEHPFGGGNHQHIGKPSTIRRDAP.

Belongs to the universal ribosomal protein uL2 family. As to quaternary structure, component of the large ribosomal subunit.

The protein localises to the cytoplasm. Its function is as follows. Component of the large ribosomal subunit. The ribosome is a large ribonucleoprotein complex responsible for the synthesis of proteins in the cell. This chain is Large ribosomal subunit protein uL2 (rpl8), found in Danio rerio (Zebrafish).